The following is a 264-amino-acid chain: Probable transcriptional regulatory protein PPA1157 (264 aa).

This sequence belongs to the TACO1 family.

The protein resides in the cytoplasm. This Cutibacterium acnes (strain DSM 16379 / KPA171202) (Propionibacterium acnes) protein is Probable transcriptional regulatory protein PPA1157.